The chain runs to 255 residues: Lipoprotein-releasing system ATP-binding protein LolD 2 (255 aa).

The ABC transporter domain occupies 9–254 (LEARGIRKSY…SDSAKLETVA (246 aa)). An ATP-binding site is contributed by 45-52 (GRSGSGKS).

It belongs to the ABC transporter superfamily. Lipoprotein translocase (TC 3.A.1.125) family. The complex is composed of two ATP-binding proteins (LolD) and two transmembrane proteins (LolC and LolE).

The protein resides in the cell inner membrane. Part of the ABC transporter complex LolCDE involved in the translocation of mature outer membrane-directed lipoproteins, from the inner membrane to the periplasmic chaperone, LolA. Responsible for the formation of the LolA-lipoprotein complex in an ATP-dependent manner. The chain is Lipoprotein-releasing system ATP-binding protein LolD 2 from Rhodopirellula baltica (strain DSM 10527 / NCIMB 13988 / SH1).